Reading from the N-terminus, the 314-residue chain is Replication initiation protein (314 aa).

Basic and acidic residues predominate over residues 1–18 (MSKKAEEIQAKQSLEKEN). The segment at 1 to 25 (MSKKAEEIQAKQSLEKENSNFSKTG) is disordered.

The protein belongs to the plasmid replication initiation factor family.

Its function is as follows. This protein is probably a specific topoisomerase involved in initiating replication. This protein is specifically required and may be rate-limiting for replication of the plasmid in vivo. The chain is Replication initiation protein (repE) from Staphylococcus aureus.